A 165-amino-acid chain; its full sequence is NADPH-dependent 7-cyano-7-deazaguanine reductase (165 aa).

The disordered stretch occupies residues 1–24 (MTTRSTDQTEHLRALGQKTPYPAA). Cys56 acts as the Thioimide intermediate in catalysis. The Proton donor role is filled by Asp63. Substrate-binding positions include 78–80 (VES) and 97–98 (ME).

It belongs to the GTP cyclohydrolase I family. QueF type 1 subfamily.

The protein localises to the cytoplasm. The catalysed reaction is 7-aminomethyl-7-carbaguanine + 2 NADP(+) = 7-cyano-7-deazaguanine + 2 NADPH + 3 H(+). It participates in tRNA modification; tRNA-queuosine biosynthesis. Functionally, catalyzes the NADPH-dependent reduction of 7-cyano-7-deazaguanine (preQ0) to 7-aminomethyl-7-deazaguanine (preQ1). This is NADPH-dependent 7-cyano-7-deazaguanine reductase from Nitratidesulfovibrio vulgaris (strain ATCC 29579 / DSM 644 / CCUG 34227 / NCIMB 8303 / VKM B-1760 / Hildenborough) (Desulfovibrio vulgaris).